A 185-amino-acid chain; its full sequence is Comitin (185 aa).

One can recognise a Bulb-type lectin domain in the interval 1 to 123 (MELLRQGEHL…YKQILYSSKP (123 aa)). The interval 138–185 (SGHPQSAYPPQQPGYGYPAQPGYPPQPGYPPQHGYPPQHGYPQQPGYY) is disordered. A compositionally biased stretch (low complexity) spans 141-157 (PQSAYPPQQPGYGYPAQ). 5 repeat units span residues 153–158 (GYPAQP), 159–164 (GYPPQP), 165–170 (GYPPQH), 171–176 (GYPPQH), and 177–182 (GYPQQP). The interval 153-182 (GYPAQPGYPPQPGYPPQHGYPPQHGYPQQP) is 5 X 6 AA tandem repeats of G-Y-P-X-Q-[PH]. Residues 158–171 (PGYPPQPGYPPQHG) are compositionally biased toward pro residues. Over residues 172 to 185 (YPPQHGYPQQPGYY) the composition is skewed to low complexity.

Homodimer in solution. The N-terminus is blocked.

It is found in the golgi apparatus membrane. It localises to the endomembrane system. The protein resides in the cytoplasm. The protein localises to the cytoskeleton. In terms of biological role, may have a role in cell motility. It has high affinity for both G-actin and F-actin. Binds to vesicle membranes via mannose residues and, by way of its interaction with actin, links these membranes to the cytoskeleton. In Dictyostelium discoideum (Social amoeba), this protein is Comitin (comA).